Reading from the N-terminus, the 117-residue chain is Big defensin (117 aa).

The signal sequence occupies residues 1 to 23; sequence MEKKTAYCLLFLVLLVPYTALGA. A propeptide spanning residues 24–33 is cleaved from the precursor; the sequence is VLKRAPAKKE. Intrachain disulfides connect cysteine 82–cysteine 112, cysteine 89–cysteine 107, and cysteine 93–cysteine 113.

Belongs to the big defensin family.

The protein localises to the secreted. In terms of biological role, significantly inhibits the growth of Gram-negative and Gram-positive bacteria and fungi in vitro. The protein is Big defensin of Branchiostoma belcheri (Amphioxus).